We begin with the raw amino-acid sequence, 839 residues long: AMP deaminase (839 aa).

The chain crosses the membrane as a helical span at residues Leu8–Phe28. The segment at Glu40–Glu167 is disordered. Residues Asp85–Thr94 show a composition bias toward gly residues. 2 positions are modified to phosphoserine: Ser134 and Ser140. Positions Ser153–Asn162 are enriched in acidic residues. Residue Ser203 is modified to Phosphoserine. Ala289–Ser296 is an ATP binding site. 2 residues coordinate Zn(2+): His391 and His393. Substrate contacts are provided by residues His393 and Lys462 to Tyr467. His659 contributes to the Zn(2+) binding site. Substrate is bound at residue Glu662. Residue His681 is the Proton acceptor of the active site. Zn(2+) is bound at residue Asp736. Asp737 to Gln740 lines the substrate pocket.

Belongs to the metallo-dependent hydrolases superfamily. Adenosine and AMP deaminases family. Homodimer. Interacts with AHK4. Interacts with EER5. The cofactor is Zn(2+). In terms of tissue distribution, expressed in seedlings, roots, leaves, flowers, pollen grains, pollen tubes and siliques, and at a lower level in stems.

The protein localises to the membrane. The protein resides in the microsome membrane. It carries out the reaction AMP + H2O + H(+) = IMP + NH4(+). It functions in the pathway purine metabolism; IMP biosynthesis via salvage pathway; IMP from AMP: step 1/1. Activated by ATP. Activated by sulfate ions (in vitro). Inhibited by phosphate ions. AMP deaminase plays a critical role in energy metabolism. Essential for the transition from zygote to embryo. In Arabidopsis thaliana (Mouse-ear cress), this protein is AMP deaminase.